The chain runs to 655 residues: p-hydroxybenzoic acid efflux pump subunit AaeB (655 aa).

The Periplasmic portion of the chain corresponds to 1–12; the sequence is MGIFSIANQHIR. Residues 13–33 form a helical membrane-spanning segment; it reads FAVKLACAIVLALFIGFHFQL. The Cytoplasmic segment spans residues 34-37; the sequence is ETPR. A helical membrane pass occupies residues 38 to 58; the sequence is WAVLTAAIVAAGPAFAAGGEP. The Periplasmic segment spans residues 59–68; that stretch reads YSGAIRYRGM. Residues 69–89 traverse the membrane as a helical segment; it reads LRIIGTFIGCIAALIIIISMI. Residues 90-92 lie on the Cytoplasmic side of the membrane; it reads RAP. Residues 93–113 form a helical membrane-spanning segment; that stretch reads LLMILVCCVWVGFCTWISSLV. The Periplasmic portion of the chain corresponds to 114 to 120; that stretch reads RIENSYA. A helical membrane pass occupies residues 121–141; that stretch reads WGLSGYTALIIVITIQTEPLL. Residues 142 to 151 are Cytoplasmic-facing; sequence TPQFALERCS. Residues 152–172 traverse the membrane as a helical segment; that stretch reads EIVIGIGCAILADLLFSPRSI. At 173-369 the chain is on the periplasmic side; sequence KQEVDRELDS…RTTLSCILGT (197 aa). Residues 370 to 390 traverse the membrane as a helical segment; that stretch reads LFWLWTGWTSGNGEMVMIAVV. The Cytoplasmic portion of the chain corresponds to 391–406; that stretch reads TSLAMRLPNPRMVCID. The chain crosses the membrane as a helical span at residues 407 to 427; sequence FIYGTLAALPLGLLYFLVIIP. Over 428 to 430 the chain is Periplasmic; sequence NTQ. The chain crosses the membrane as a helical span at residues 431 to 451; the sequence is QSMLLLCLSLAVLGFFIGIEV. Residues 452-458 are Cytoplasmic-facing; it reads QKRRLGS. A helical transmembrane segment spans residues 459–479; the sequence is MGALASTINIIVLDNPMTFHF. Residues 480-481 are Periplasmic-facing; the sequence is SQ. The chain crosses the membrane as a helical span at residues 482–502; that stretch reads FLDSALGQIVGCMLAFIVILL. The Cytoplasmic segment spans residues 503–655; the sequence is VRDKSKDRTG…HKYQNALTDS (153 aa).

Belongs to the aromatic acid exporter ArAE (TC 2.A.85) family.

The protein resides in the cell inner membrane. Its function is as follows. Forms an efflux pump with AaeA. Could function as a metabolic relief valve, allowing to eliminate certain compounds when they accumulate to high levels in the cell. The protein is p-hydroxybenzoic acid efflux pump subunit AaeB of Salmonella paratyphi A (strain ATCC 9150 / SARB42).